The primary structure comprises 140 residues: Zinc finger SWIM domain-containing protein 7 (140 aa).

The segment at 66–114 (YQVLGSSSKTYTCLASCHYCSCPAFAFSVLRKSDSILCKHLLAVYLSQV) adopts an SWIM-type zinc-finger fold.

This sequence belongs to the SWS1 family. Interacts with RAD51D and XRCC3; involved in homologous recombination repair. Interacts with SWSAP1; they form a functional complex involved in homologous recombination repair and stabilize each other. As to expression, expressed in ovary and testis.

It is found in the nucleus. Functionally, involved in early stages of the homologous recombination repair (HRR) pathway of double-stranded DNA breaks arising during DNA replication or induced by DNA-damaging agents. Required for meiotic progression, hence for fertility. The chain is Zinc finger SWIM domain-containing protein 7 (ZSWIM7) from Homo sapiens (Human).